A 438-amino-acid chain; its full sequence is Carboxypeptidase A6 (438 aa).

Residues 1 to 30 form the signal peptide; the sequence is MNFLGNPRSHTAAFLPVCWLLLNILKPGHC. The propeptide at 31–129 is activation peptide; it reads HSYDNRYAGD…NSLQTQRNRR (99 aa). N-linked (GlcNAc...) asparagine glycosylation is found at Asn89 and Asn153. One can recognise a Peptidase M14 domain in the interval 138–433; the sequence is VYHSLEDIQS…LAVKNITMHL (296 aa). Residues His197 and Glu200 each coordinate Zn(2+). Residues 197-200, Arg255, and 272-273 contribute to the substrate site; these read HARE and NR. Residues Cys266 and Cys289 are joined by a disulfide bond. His325 is a binding site for Zn(2+). A substrate-binding site is contributed by 326-327; that stretch reads AY. Asn344 carries an N-linked (GlcNAc...) asparagine glycan. Tyr377 is a binding site for substrate. Glu399 functions as the Proton donor/acceptor in the catalytic mechanism. An N-linked (GlcNAc...) asparagine glycan is attached at Asn428.

This sequence belongs to the peptidase M14 family. It depends on Zn(2+) as a cofactor. In brain, highly expressed in the olfactory bulb with lower levels in other regions including cerebral cortex, hippocampus, hypothalamus, striatum and medulla. Within the olfactory bulb, highest levels occur in the mitral and granular layers with lower levels in the internal and external plexiform layers. Moderate levels are found in the epididymis with low levels in colon and spleen. Not detected in adrenal, liver, lung, ovary or testis. At embryonic day 14.5, enriched in eye, ear, osteoblasts, stomach, skin, dorsal root ganglia and throughout the CNS.

It is found in the secreted. Its subcellular location is the extracellular space. It localises to the extracellular matrix. In terms of biological role, may be involved in the proteolytic inactivation of enkephalins and neurotensin in some brain areas. May convert inactive angiotensin I into the biologically active angiotensin II. Releases a C-terminal amino acid, with preference for large hydrophobic C-terminal amino acids and shows only very weak activity toward small amino acids and histidine. This is Carboxypeptidase A6 (Cpa6) from Mus musculus (Mouse).